The following is a 291-amino-acid chain: ATP synthase gamma chain (291 aa).

The protein belongs to the ATPase gamma chain family. In terms of assembly, F-type ATPases have 2 components, CF(1) - the catalytic core - and CF(0) - the membrane proton channel. CF(1) has five subunits: alpha(3), beta(3), gamma(1), delta(1), epsilon(1). CF(0) has three main subunits: a, b and c.

Its subcellular location is the cell inner membrane. Its function is as follows. Produces ATP from ADP in the presence of a proton gradient across the membrane. The gamma chain is believed to be important in regulating ATPase activity and the flow of protons through the CF(0) complex. The polypeptide is ATP synthase gamma chain (Xanthobacter autotrophicus (strain ATCC BAA-1158 / Py2)).